The sequence spans 261 residues: Undecaprenyl-diphosphatase (261 aa).

8 helical membrane-spanning segments follow: residues 1-21, 41-61, 69-89, 95-115, 129-149, 169-186, 206-226, and 241-261; these read MNYIQAIILAIIEGITEFLPV, FTKLFTIVIQLGAILSVVVLY, LDFYFKLLVAFIPAVVLGLLF, ALLESPVTVAVSLLVGGIILL, ITYLKAFKIGLFQCIAMIPGV, AAEFSFFLAVPTMLGATL, ILIIGNIVAFLVALLAIKTFI, and RIVAGIVLLLIHFFIHPLTLI.

It belongs to the UppP family.

The protein localises to the cell inner membrane. It catalyses the reaction di-trans,octa-cis-undecaprenyl diphosphate + H2O = di-trans,octa-cis-undecaprenyl phosphate + phosphate + H(+). Catalyzes the dephosphorylation of undecaprenyl diphosphate (UPP). Confers resistance to bacitracin. This Flavobacterium psychrophilum (strain ATCC 49511 / DSM 21280 / CIP 103535 / JIP02/86) protein is Undecaprenyl-diphosphatase.